Consider the following 397-residue polypeptide: Mannan endo-1,4-beta-mannosidase 1 (397 aa).

Positions 1–23 are cleaved as a signal peptide; sequence MSYARRSCICGLFLLFLALVCEA. Tryptophan 83 and asparagine 198 together coordinate substrate. Catalysis depends on glutamate 199, which acts as the Proton donor. Tyrosine 276 is a binding site for substrate. The active-site Nucleophile is the glutamate 316. Tryptophan 354 is a substrate binding site.

It belongs to the glycosyl hydrolase 5 (cellulase A) family.

The protein resides in the secreted. It carries out the reaction Random hydrolysis of (1-&gt;4)-beta-D-mannosidic linkages in mannans, galactomannans and glucomannans.. In Solanum lycopersicum (Tomato), this protein is Mannan endo-1,4-beta-mannosidase 1 (MAN1).